Consider the following 376-residue polypeptide: Multiphosphoryl transfer protein (376 aa).

In terms of domain architecture, PTS EIIA type-2 spans 2–142; the sequence is FQLSVQDIHP…EELRALLMGE (141 aa). His62 acts as the Tele-phosphohistidine intermediate; for EIIA activity in catalysis. Position 62 is a phosphohistidine; by HPr (His62). The tract at residues 156–284 is m domain; the sequence is TLDVIASSLV…LTSDDALTDD (129 aa). The 91-residue stretch at 285–375 folds into the HPr domain; the sequence is VLSAEFVVRN…DAIAAGLGEG (91 aa). The Pros-phosphohistidine intermediate; for HPr activity role is filled by His299. His299 is modified (phosphohistidine; by EI).

The protein resides in the cytoplasm. Its function is as follows. The phosphoenolpyruvate-dependent sugar phosphotransferase system (sugar PTS), a major carbohydrate active transport system, catalyzes the phosphorylation of incoming sugar substrates concomitantly with their translocation across the cell membrane. The enzyme II FruAB PTS system is involved in fructose transport. The polypeptide is Multiphosphoryl transfer protein (fruB) (Salmonella typhimurium (strain LT2 / SGSC1412 / ATCC 700720)).